Consider the following 212-residue polypeptide: Claudin-7-A (212 aa).

Topologically, residues 1-7 (MANSGVQ) are cytoplasmic. Residues 8-28 (LLGFGLSLIGIIGLIVGTILP) form a helical membrane-spanning segment. The Extracellular segment spans residues 29–81 (QWKMSAYVGDSIITAVATYQGLWMSCAFQSTGQLQCKIYDSILQLDSDLQATR). A helical transmembrane segment spans residues 82-102 (ALMIVGIIVSIAGLGVASIGM). Residues 103–119 (KCTTCGADDKVRKTRTA) are Cytoplasmic-facing. The chain crosses the membrane as a helical span at residues 120 to 140 (MTGGIILLVGALCAVVACSWF). Residues 141–162 (AHNVIRAFYNPFTPVNTKFEFG) lie on the Extracellular side of the membrane. The chain crosses the membrane as a helical span at residues 163–183 (AAIFIAWGGSFLDVLGGAMLA). At 184-212 (ASCPRSKQVSKYPKSNSTRSANGSNKEYV) the chain is on the cytoplasmic side. Residues 191–212 (QVSKYPKSNSTRSANGSNKEYV) form a disordered region.

This sequence belongs to the claudin family.

It localises to the cell junction. The protein localises to the tight junction. The protein resides in the cell membrane. Functionally, plays a major role in tight junction-specific obliteration of the intercellular space. The sequence is that of Claudin-7-A from Danio rerio (Zebrafish).